The sequence spans 194 residues: Adenylate kinase isoenzyme 1 (194 aa).

Met-1 is modified (N-acetylmethionine). Residue 18–23 (GSGKGT) participates in ATP binding. Position 38 is a phosphoserine (Ser-38). The tract at residues 38 to 67 (STGDLLRSEVSSGSARGKKLSEIMEKGQLV) is NMP. Residues Thr-39, Arg-44, 65 to 67 (QLV), 94 to 97 (GYPR), and Gln-101 contribute to the AMP site. The segment at 131–141 (KRGETSGRVDD) is LID. Position 132 (Arg-132) interacts with ATP. Residues Arg-138 and Arg-149 each coordinate AMP. Residue Gly-177 coordinates ATP.

It belongs to the adenylate kinase family. AK1 subfamily. In terms of assembly, monomer. Mg(2+) serves as cofactor.

The protein localises to the cytoplasm. The catalysed reaction is a ribonucleoside 5'-phosphate + ATP = a ribonucleoside 5'-diphosphate + ADP. It carries out the reaction AMP + ATP = 2 ADP. The enzyme catalyses dAMP + ATP = dADP + ADP. It catalyses the reaction dATP + AMP = dADP + ADP. The catalysed reaction is dAMP + dATP = 2 dADP. It carries out the reaction a 2'-deoxyribonucleoside 5'-diphosphate + ATP = a 2'-deoxyribonucleoside 5'-triphosphate + ADP. The enzyme catalyses a ribonucleoside 5'-diphosphate + ATP = a ribonucleoside 5'-triphosphate + ADP. It catalyses the reaction CDP + GTP = CTP + GDP. The catalysed reaction is GDP + ATP = GTP + ADP. It carries out the reaction UDP + ATP = UTP + ADP. The enzyme catalyses GTP + UDP = UTP + GDP. It catalyses the reaction dTDP + GTP = dTTP + GDP. The catalysed reaction is dCDP + GTP = dCTP + GDP. It carries out the reaction dGDP + ATP = dGTP + ADP. The enzyme catalyses dADP + GTP = dATP + GDP. It catalyses the reaction thiamine diphosphate + ADP = thiamine triphosphate + AMP. In terms of biological role, catalyzes the reversible transfer of the terminal phosphate group between ATP and AMP. Also displays broad nucleoside diphosphate kinase activity. Plays an important role in cellular energy homeostasis and in adenine nucleotide metabolism. Also catalyzes at a very low rate the synthesis of thiamine triphosphate (ThTP) from thiamine diphosphate (ThDP) and ADP. In Homo sapiens (Human), this protein is Adenylate kinase isoenzyme 1.